The chain runs to 415 residues: Probable glucuronosyltransferase Os01g0926600 (415 aa).

Over Met-1–Arg-4 the chain is Cytoplasmic. The chain crosses the membrane as a helical; Signal-anchor for type II membrane protein span at residues Leu-5–Ala-25. The Lumenal segment spans residues Arg-26–Trp-415. N-linked (GlcNAc...) asparagine glycans are attached at residues Asn-142 and Asn-403.

This sequence belongs to the glycosyltransferase 47 family.

The protein localises to the golgi apparatus membrane. Involved in the synthesis of glucuronoxylan hemicellulose in secondary cell walls. The chain is Probable glucuronosyltransferase Os01g0926600 from Oryza sativa subsp. japonica (Rice).